Consider the following 149-residue polypeptide: Deoxyuridine 5'-triphosphate nucleotidohydrolase (149 aa).

Substrate is bound by residues 68 to 70, Asn81, 85 to 87, and Met95; these read RSG and LID.

Belongs to the dUTPase family. Requires Mg(2+) as cofactor.

It carries out the reaction dUTP + H2O = dUMP + diphosphate + H(+). Its pathway is pyrimidine metabolism; dUMP biosynthesis; dUMP from dCTP (dUTP route): step 2/2. Its function is as follows. This enzyme is involved in nucleotide metabolism: it produces dUMP, the immediate precursor of thymidine nucleotides and it decreases the intracellular concentration of dUTP so that uracil cannot be incorporated into DNA. This chain is Deoxyuridine 5'-triphosphate nucleotidohydrolase, found in Bordetella bronchiseptica (strain ATCC BAA-588 / NCTC 13252 / RB50) (Alcaligenes bronchisepticus).